A 219-amino-acid chain; its full sequence is Cell division protein B2 (219 aa).

Its function is as follows. Part of a cell division machinery. The protein is Cell division protein B2 of Sulfolobus acidocaldarius (strain ATCC 33909 / DSM 639 / JCM 8929 / NBRC 15157 / NCIMB 11770).